We begin with the raw amino-acid sequence, 247 residues long: Ribosomal RNA small subunit methyltransferase J (247 aa).

S-adenosyl-L-methionine is bound by residues 101–102 (RD), 117–118 (ER), 153–154 (SS), and aspartate 171.

This sequence belongs to the methyltransferase superfamily. RsmJ family.

The protein resides in the cytoplasm. It carries out the reaction guanosine(1516) in 16S rRNA + S-adenosyl-L-methionine = N(2)-methylguanosine(1516) in 16S rRNA + S-adenosyl-L-homocysteine + H(+). Functionally, specifically methylates the guanosine in position 1516 of 16S rRNA. In Photorhabdus laumondii subsp. laumondii (strain DSM 15139 / CIP 105565 / TT01) (Photorhabdus luminescens subsp. laumondii), this protein is Ribosomal RNA small subunit methyltransferase J.